The chain runs to 230 residues: DNA ADP-ribosyl transferase (230 aa).

The DarT domain maps to 26–230 (WIVWHFTHAD…KYVIKPGMYY (205 aa)). NAD(+) is bound by residues 30–32 (HFT), glycine 39, leucine 47, and arginine 67. Arginine 67 functions as the Proton acceptor in the catalytic mechanism. Residue glutamate 183 is part of the active site.

The protein belongs to the DarT ADP-ribosyltransferase family. As to quaternary structure, interacts with cognate antitoxin DarG (via C-terminus); this heterodimeric complex neutralizes the toxic effect of DarT by preventing ssDNA binding to DarT and consequently inactivating the toxin by direct protein-protein interactions.

The catalysed reaction is a thymidine in DNA + NAD(+) = an N-(ADP-alpha-D-ribosyl)-thymidine in DNA + nicotinamide + H(+). Functionally, toxic component of the hybrid type II/IV toxin-antitoxin (TA) system DarTG, which plays a crucial role in controlling bacterial growth and bacteriophage infection. ADP-ribosylates ssDNA, preferentially in the motif TTTW. In case of phage infection, DarT toxin ADP-ribosylates DNA, which inhibits both viral DNA and RNA synthesis and leads to abortive infection. Its toxic effect is neutralized by cognate antitoxin DarG. In Mycobacterium bovis (strain BCG / Pasteur 1173P2), this protein is DNA ADP-ribosyl transferase.